We begin with the raw amino-acid sequence, 62 residues long: Putative antitoxin AF_1095 (62 aa).

The protein belongs to the UPF0165 family.

Possibly the antitoxin component of a type II toxin-antitoxin (TA) system. The polypeptide is Putative antitoxin AF_1095 (Archaeoglobus fulgidus (strain ATCC 49558 / DSM 4304 / JCM 9628 / NBRC 100126 / VC-16)).